Reading from the N-terminus, the 214-residue chain is MKFFIDTANLDEIREGVELGLVDGVTTNPSLIARENLPFEELIAEICKIVDGPVSAEVISLDAPGMVAEAKKLASIDEKVVIKVPMTAEGLKAVRQLSAAGIKTNVTLIFSANQALLAAKAGASYVSPFVGRLDDIGVNSADLISDILTIFDNYGYASEVIVASVRGPQHVLDSALLGADIATIPLKTIKQLTKHPLTDKGMEQFLADWEKRTQ.

The Schiff-base intermediate with substrate role is filled by lysine 83.

The protein belongs to the transaldolase family. Type 3B subfamily.

It localises to the cytoplasm. It catalyses the reaction D-sedoheptulose 7-phosphate + D-glyceraldehyde 3-phosphate = D-erythrose 4-phosphate + beta-D-fructose 6-phosphate. It functions in the pathway carbohydrate degradation; pentose phosphate pathway; D-glyceraldehyde 3-phosphate and beta-D-fructose 6-phosphate from D-ribose 5-phosphate and D-xylulose 5-phosphate (non-oxidative stage): step 2/3. Functionally, transaldolase is important for the balance of metabolites in the pentose-phosphate pathway. The chain is Probable transaldolase from Desulfotalea psychrophila (strain LSv54 / DSM 12343).